A 477-amino-acid polypeptide reads, in one-letter code: Glycogen synthase (477 aa).

Residue Lys-15 coordinates ADP-alpha-D-glucose.

This sequence belongs to the glycosyltransferase 1 family. Bacterial/plant glycogen synthase subfamily.

It carries out the reaction [(1-&gt;4)-alpha-D-glucosyl](n) + ADP-alpha-D-glucose = [(1-&gt;4)-alpha-D-glucosyl](n+1) + ADP + H(+). It functions in the pathway glycan biosynthesis; glycogen biosynthesis. In terms of biological role, synthesizes alpha-1,4-glucan chains using ADP-glucose. In Klebsiella pneumoniae subsp. pneumoniae (strain ATCC 700721 / MGH 78578), this protein is Glycogen synthase.